The sequence spans 149 residues: Arginine repressor (149 aa).

The protein belongs to the ArgR family.

The protein resides in the cytoplasm. Its pathway is amino-acid biosynthesis; L-arginine biosynthesis [regulation]. Functionally, regulates arginine biosynthesis genes. The sequence is that of Arginine repressor from Chlorobaculum parvum (strain DSM 263 / NCIMB 8327) (Chlorobium vibrioforme subsp. thiosulfatophilum).